Reading from the N-terminus, the 199-residue chain is Adenylyl-sulfate kinase (199 aa).

A disordered region spans residues 1–22; it reads MSESNHITWHDSEVTKKQRQHK. 34–41 lines the ATP pocket; it reads GLSGSGKS. The Phosphoserine intermediate role is filled by Ser108.

It belongs to the APS kinase family.

The catalysed reaction is adenosine 5'-phosphosulfate + ATP = 3'-phosphoadenylyl sulfate + ADP + H(+). It functions in the pathway sulfur metabolism; hydrogen sulfide biosynthesis; sulfite from sulfate: step 2/3. Its function is as follows. Catalyzes the synthesis of activated sulfate. This chain is Adenylyl-sulfate kinase, found in Staphylococcus epidermidis (strain ATCC 12228 / FDA PCI 1200).